The chain runs to 688 residues: MNFENLLIELGTEELPPKALRKLAESFLANFTEELTKADLAFKSAVWYAAPRRLAINVTELAIAQADKIVEKRGPAVSSAFDAEGKPTKAAEGWARGNGITVDQAERLVTDKGEWLVYNAKVEGVETKSLIAAMAQRALDKLPIPKPMRWGSSKTQFIRPVHTATMLLGSELIEGELLGIKSARNVRGHRFMGTGFELDHADNYLTLLKEKGKVIADYESRKALIKADAEKAAAKIGGTADIEDDLLEEVTSLVEWPVVLTASFEEKFLNVPSEALVYTMKGDQKYFPVFDEAGKLLPNFIFVANIESKDPAQIIAGNEKVVRPRLADAEFFFNTDKKHTLESRLPSLETVLFQQQLGTLKDKVTRISALAAFIAEQTGANAVDAARAGLLSKTDLMTNMVMEFTDTQGTMGMHYARLDGETEAVALAMEEQYKPKFSGDTVPTAAVSCAVALADKLDTLVGIFGIGQAPKGAADPFALRRAAIGVLRIIVENKLPLDLVTLIAKAQELHGTNLSNANASDEVLEFLMARFRAWYQDKGIDVDVILAVLARRPTRPADFDSRINAVSHFRSLEASSALAAANKRVSNILAKVEGELPTAINSALLAEAAEQALAAKLAELQPQLAPLFANADYQQALTLLSSLRESVDQFFEDVMVMADDEALKNNRLALLNNLREQFLHVADISLLQ.

Belongs to the class-II aminoacyl-tRNA synthetase family. As to quaternary structure, tetramer of two alpha and two beta subunits.

It is found in the cytoplasm. The enzyme catalyses tRNA(Gly) + glycine + ATP = glycyl-tRNA(Gly) + AMP + diphosphate. This Shewanella sp. (strain MR-4) protein is Glycine--tRNA ligase beta subunit.